A 348-amino-acid chain; its full sequence is Probable dual-specificity RNA methyltransferase RlmN (348 aa).

The active-site Proton acceptor is the glutamate 89. Residues 95–328 (HKNRNTVCVS…VTLRISYGSK (234 aa)) enclose the Radical SAM core domain. The cysteines at positions 102 and 333 are disulfide-linked. [4Fe-4S] cluster is bound by residues cysteine 109, cysteine 113, and cysteine 116. S-adenosyl-L-methionine contacts are provided by residues 159–160 (GE), serine 191, 214–216 (SLH), and asparagine 290. Cysteine 333 functions as the S-methylcysteine intermediate in the catalytic mechanism.

This sequence belongs to the radical SAM superfamily. RlmN family. The cofactor is [4Fe-4S] cluster.

Its subcellular location is the cytoplasm. The enzyme catalyses adenosine(2503) in 23S rRNA + 2 reduced [2Fe-2S]-[ferredoxin] + 2 S-adenosyl-L-methionine = 2-methyladenosine(2503) in 23S rRNA + 5'-deoxyadenosine + L-methionine + 2 oxidized [2Fe-2S]-[ferredoxin] + S-adenosyl-L-homocysteine. The catalysed reaction is adenosine(37) in tRNA + 2 reduced [2Fe-2S]-[ferredoxin] + 2 S-adenosyl-L-methionine = 2-methyladenosine(37) in tRNA + 5'-deoxyadenosine + L-methionine + 2 oxidized [2Fe-2S]-[ferredoxin] + S-adenosyl-L-homocysteine. In terms of biological role, specifically methylates position 2 of adenine 2503 in 23S rRNA and position 2 of adenine 37 in tRNAs. The sequence is that of Probable dual-specificity RNA methyltransferase RlmN from Dictyoglomus turgidum (strain DSM 6724 / Z-1310).